Reading from the N-terminus, the 347-residue chain is UDP-glucose 4-epimerase (347 aa).

NAD(+) contacts are provided by residues 11–13, 32–36, 65–66, Phe-87, and Lys-91; these read GYI, DNFHN, and DI. Residue 131–133 coordinates substrate; that stretch reads SAT. Catalysis depends on Tyr-156, which acts as the Proton acceptor. NAD(+)-binding residues include Lys-160 and Tyr-184. Residues 184–186, 205–207, 223–225, Arg-238, and 299–302 contribute to the substrate site; these read YFN, NNL, NVF, and REGD.

Belongs to the NAD(P)-dependent epimerase/dehydratase family. Homodimer. It depends on NAD(+) as a cofactor.

The catalysed reaction is UDP-alpha-D-glucose = UDP-alpha-D-galactose. It carries out the reaction UDP-N-acetyl-alpha-D-glucosamine = UDP-N-acetyl-alpha-D-galactosamine. It functions in the pathway carbohydrate metabolism; galactose metabolism. Its function is as follows. Catalyzes two distinct but analogous reactions: the reversible epimerization of UDP-glucose to UDP-galactose and the reversible epimerization of UDP-N-acetylglucosamine to UDP-N-acetylgalactosamine. The reaction with UDP-Gal plays a critical role in the Leloir pathway of galactose catabolism in which galactose is converted to the glycolytic intermediate glucose 6-phosphate. It contributes to the catabolism of dietary galactose and enables the endogenous biosynthesis of both UDP-Gal and UDP-GalNAc when exogenous sources are limited. Both UDP-sugar interconversions are important in the synthesis of glycoproteins and glycolipids. This is UDP-glucose 4-epimerase (Gale) from Mus musculus (Mouse).